We begin with the raw amino-acid sequence, 269 residues long: Shikimate dehydrogenase (NADP(+)) (269 aa).

Shikimate contacts are provided by residues 17–19 (SKS) and Thr64. Lys68 acts as the Proton acceptor in catalysis. Residue Glu80 coordinates NADP(+). Positions 89 and 105 each coordinate shikimate. Residues 130 to 134 (GAGGA), 154 to 159 (NRTHAK), and Met213 each bind NADP(+). Residue Tyr215 participates in shikimate binding. Gly237 contacts NADP(+).

It belongs to the shikimate dehydrogenase family. As to quaternary structure, homodimer.

It carries out the reaction shikimate + NADP(+) = 3-dehydroshikimate + NADPH + H(+). It functions in the pathway metabolic intermediate biosynthesis; chorismate biosynthesis; chorismate from D-erythrose 4-phosphate and phosphoenolpyruvate: step 4/7. Its function is as follows. Involved in the biosynthesis of the chorismate, which leads to the biosynthesis of aromatic amino acids. Catalyzes the reversible NADPH linked reduction of 3-dehydroshikimate (DHSA) to yield shikimate (SA). This chain is Shikimate dehydrogenase (NADP(+)), found in Neisseria flavescens.